Here is a 154-residue protein sequence, read N- to C-terminus: Low molecular weight protein-tyrosine-phosphatase PtpA (154 aa).

C8 serves as the catalytic Nucleophile. Residue R14 is part of the active site. The active-site Proton donor is the D120.

The protein belongs to the low molecular weight phosphotyrosine protein phosphatase family. As to quaternary structure, interacts with host CORO1A. Phosphorylations at Tyr-122 and Tyr-123 are essential for phosphatase activity.

Its subcellular location is the secreted. The catalysed reaction is O-phospho-L-tyrosyl-[protein] + H2O = L-tyrosyl-[protein] + phosphate. Functionally, secreted tyrosine phosphatase that plays a critical role during infection as a bacterial effector protein that counteracts host defenses. Required for intramacrophage survival. The chain is Low molecular weight protein-tyrosine-phosphatase PtpA (ptpA) from Staphylococcus aureus (strain MRSA252).